Reading from the N-terminus, the 319-residue chain is Cytochrome c biogenesis protein CcsA (319 aa).

A run of 7 helical transmembrane segments spans residues 17-37, 44-64, 68-88, 143-163, 223-243, 257-271, and 286-306; these read TISIVITIHLITLLVHELGGL, GMIVTFFSITGFLVSRWASSG, LSNLYESLIFLSWALYILHTI, MLLSYATLLCGSLLSAAILII, VISLGFTLLTIGILCGAVWAN, TWAFITWTIFAIYLH, and VASIGFLIIWICYFGINLLGI.

This sequence belongs to the CcmF/CycK/Ccl1/NrfE/CcsA family. In terms of assembly, may interact with Ccs1.

It is found in the plastid. Its subcellular location is the chloroplast thylakoid membrane. Functionally, required during biogenesis of c-type cytochromes (cytochrome c6 and cytochrome f) at the step of heme attachment. The chain is Cytochrome c biogenesis protein CcsA from Lolium perenne (Perennial ryegrass).